The primary structure comprises 318 residues: Porphobilinogen deaminase (318 aa).

Cysteine 241 carries the S-(dipyrrolylmethanemethyl)cysteine modification.

Belongs to the HMBS family. In terms of assembly, monomer. Dipyrromethane serves as cofactor.

It carries out the reaction 4 porphobilinogen + H2O = hydroxymethylbilane + 4 NH4(+). The protein operates within porphyrin-containing compound metabolism; protoporphyrin-IX biosynthesis; coproporphyrinogen-III from 5-aminolevulinate: step 2/4. Functionally, tetrapolymerization of the monopyrrole PBG into the hydroxymethylbilane pre-uroporphyrinogen in several discrete steps. The protein is Porphobilinogen deaminase of Geotalea uraniireducens (strain Rf4) (Geobacter uraniireducens).